Here is a 255-residue protein sequence, read N- to C-terminus: Thiazole synthase (255 aa).

Catalysis depends on Lys-96, which acts as the Schiff-base intermediate with DXP. 1-deoxy-D-xylulose 5-phosphate contacts are provided by residues Gly-157, 183–184, and 205–206; these read AG and NS.

It belongs to the ThiG family. As to quaternary structure, homotetramer. Forms heterodimers with either ThiH or ThiS.

It localises to the cytoplasm. The catalysed reaction is [ThiS sulfur-carrier protein]-C-terminal-Gly-aminoethanethioate + 2-iminoacetate + 1-deoxy-D-xylulose 5-phosphate = [ThiS sulfur-carrier protein]-C-terminal Gly-Gly + 2-[(2R,5Z)-2-carboxy-4-methylthiazol-5(2H)-ylidene]ethyl phosphate + 2 H2O + H(+). It functions in the pathway cofactor biosynthesis; thiamine diphosphate biosynthesis. Functionally, catalyzes the rearrangement of 1-deoxy-D-xylulose 5-phosphate (DXP) to produce the thiazole phosphate moiety of thiamine. Sulfur is provided by the thiocarboxylate moiety of the carrier protein ThiS. In vitro, sulfur can be provided by H(2)S. This is Thiazole synthase from Exiguobacterium sibiricum (strain DSM 17290 / CCUG 55495 / CIP 109462 / JCM 13490 / 255-15).